The chain runs to 314 residues: Methionyl-tRNA formyltransferase (314 aa).

113–116 provides a ligand contact to (6S)-5,6,7,8-tetrahydrofolate; sequence SLLP.

Belongs to the Fmt family.

It carries out the reaction L-methionyl-tRNA(fMet) + (6R)-10-formyltetrahydrofolate = N-formyl-L-methionyl-tRNA(fMet) + (6S)-5,6,7,8-tetrahydrofolate + H(+). In terms of biological role, attaches a formyl group to the free amino group of methionyl-tRNA(fMet). The formyl group appears to play a dual role in the initiator identity of N-formylmethionyl-tRNA by promoting its recognition by IF2 and preventing the misappropriation of this tRNA by the elongation apparatus. This Pseudomonas syringae pv. syringae (strain B728a) protein is Methionyl-tRNA formyltransferase.